The sequence spans 457 residues: tRNA-2-methylthio-N(6)-dimethylallyladenosine synthase (457 aa).

Positions Lys-8–Ala-123 constitute an MTTase N-terminal domain. [4Fe-4S] cluster is bound by residues Cys-17, Cys-54, Cys-86, Cys-160, Cys-164, and Cys-167. The 234-residue stretch at Arg-146 to Arg-379 folds into the Radical SAM core domain. Residues Gln-382–Leu-449 enclose the TRAM domain.

This sequence belongs to the methylthiotransferase family. MiaB subfamily. Monomer. [4Fe-4S] cluster serves as cofactor.

It localises to the cytoplasm. The catalysed reaction is N(6)-dimethylallyladenosine(37) in tRNA + (sulfur carrier)-SH + AH2 + 2 S-adenosyl-L-methionine = 2-methylsulfanyl-N(6)-dimethylallyladenosine(37) in tRNA + (sulfur carrier)-H + 5'-deoxyadenosine + L-methionine + A + S-adenosyl-L-homocysteine + 2 H(+). Its function is as follows. Catalyzes the methylthiolation of N6-(dimethylallyl)adenosine (i(6)A), leading to the formation of 2-methylthio-N6-(dimethylallyl)adenosine (ms(2)i(6)A) at position 37 in tRNAs that read codons beginning with uridine. The protein is tRNA-2-methylthio-N(6)-dimethylallyladenosine synthase of Methylibium petroleiphilum (strain ATCC BAA-1232 / LMG 22953 / PM1).